A 370-amino-acid polypeptide reads, in one-letter code: 3-dehydroquinate synthase (370 aa).

NAD(+) is bound by residues 107-111 (GVIGD), 131-132 (TS), Lys144, and Lys153. The Zn(2+) site is built by Glu186, His249, and His267.

Belongs to the sugar phosphate cyclases superfamily. Dehydroquinate synthase family. The cofactor is Co(2+). Zn(2+) serves as cofactor. NAD(+) is required as a cofactor.

It localises to the cytoplasm. It catalyses the reaction 7-phospho-2-dehydro-3-deoxy-D-arabino-heptonate = 3-dehydroquinate + phosphate. Its pathway is metabolic intermediate biosynthesis; chorismate biosynthesis; chorismate from D-erythrose 4-phosphate and phosphoenolpyruvate: step 2/7. Its function is as follows. Catalyzes the conversion of 3-deoxy-D-arabino-heptulosonate 7-phosphate (DAHP) to dehydroquinate (DHQ). The chain is 3-dehydroquinate synthase from Roseobacter denitrificans (strain ATCC 33942 / OCh 114) (Erythrobacter sp. (strain OCh 114)).